Reading from the N-terminus, the 561-residue chain is Glutamate--tRNA ligase (561 aa).

The 'HIGH' region motif lies at 107–117 (PNPSGPLHLGH).

This sequence belongs to the class-I aminoacyl-tRNA synthetase family. Glutamate--tRNA ligase type 2 subfamily.

It is found in the cytoplasm. It carries out the reaction tRNA(Glu) + L-glutamate + ATP = L-glutamyl-tRNA(Glu) + AMP + diphosphate. Functionally, catalyzes the attachment of glutamate to tRNA(Glu) in a two-step reaction: glutamate is first activated by ATP to form Glu-AMP and then transferred to the acceptor end of tRNA(Glu). This chain is Glutamate--tRNA ligase, found in Methanoculleus marisnigri (strain ATCC 35101 / DSM 1498 / JR1).